A 404-amino-acid polypeptide reads, in one-letter code: Corticosteroid-binding globulin (404 aa).

An N-terminal signal peptide occupies residues 1–22; sequence MLPTLYTCLLWLSTSGLWTVQA. Asn95, Asn119, and Asn175 each carry an N-linked (GlcNAc...) asparagine glycan. Gln253 is a cortisol binding site. Asn259 carries N-linked (GlcNAc...) asparagine glycosylation. Gln285 is a binding site for cortisol. The N-linked (GlcNAc...) asparagine glycan is linked to Asn326. Trp392 lines the cortisol pocket.

This sequence belongs to the serpin family. Post-translationally, glycosylation in position Asn-259 is needed for steroid binding.

Its subcellular location is the secreted. Major transport protein for glucocorticoids and progestins in the blood of almost all vertebrate species. The chain is Corticosteroid-binding globulin (SERPINA6) from Bos taurus (Bovine).